The primary structure comprises 80 residues: ATP synthase subunit c (80 aa).

Helical transmembrane passes span 11–31 (IAAT…IGIL) and 54–74 (FIVM…GLYI).

This sequence belongs to the ATPase C chain family. F-type ATPases have 2 components, F(1) - the catalytic core - and F(0) - the membrane proton channel. F(1) has five subunits: alpha(3), beta(3), gamma(1), delta(1), epsilon(1). F(0) has three main subunits: a(1), b(2) and c(10-14). The alpha and beta chains form an alternating ring which encloses part of the gamma chain. F(1) is attached to F(0) by a central stalk formed by the gamma and epsilon chains, while a peripheral stalk is formed by the delta and b chains.

It localises to the cell membrane. F(1)F(0) ATP synthase produces ATP from ADP in the presence of a proton or sodium gradient. F-type ATPases consist of two structural domains, F(1) containing the extramembraneous catalytic core and F(0) containing the membrane proton channel, linked together by a central stalk and a peripheral stalk. During catalysis, ATP synthesis in the catalytic domain of F(1) is coupled via a rotary mechanism of the central stalk subunits to proton translocation. Its function is as follows. Key component of the F(0) channel; it plays a direct role in translocation across the membrane. A homomeric c-ring of between 10-14 subunits forms the central stalk rotor element with the F(1) delta and epsilon subunits. The sequence is that of ATP synthase subunit c from Baumannia cicadellinicola subsp. Homalodisca coagulata.